Reading from the N-terminus, the 788-residue chain is Probable potassium transporter 9 (788 aa).

The Cytoplasmic segment spans residues 1–21; sequence MDPEFGRGMAPRKREPWRTTL. The helical transmembrane segment at 22–42 threads the bilayer; the sequence is LLAYQSLGVVYGDLSISPLYV. Residues 43-59 are Extracellular-facing; sequence YKSTFAEDITHSESNEE. Residues 60–80 form a helical membrane-spanning segment; sequence IFGVLSFVFWTLTLIPLIKYV. The Cytoplasmic portion of the chain corresponds to 81–151; that stretch reads SIVLRADDNG…EKHKTLQTAL (71 aa). Residues 152–172 traverse the membrane as a helical segment; the sequence is LIMVMIGTCMVIGDGVLTPAI. Topologically, residues 173-191 are extracellular; that stretch reads SVFSAVSGLELSLSRDQHE. A helical membrane pass occupies residues 192 to 212; it reads YAVIPITCVILVFLFALQHYG. Residues 213–215 lie on the Cytoplasmic side of the membrane; sequence THR. A helical transmembrane segment spans residues 216–236; it reads VGFLFAPIVLAWLICMSMLGL. The Extracellular portion of the chain corresponds to 237–264; the sequence is YNIIHWNPQVYRALNPYYMLKFLRKTKK. The chain crosses the membrane as a helical span at residues 265–285; the sequence is SGWMSLGGILLCMTGSEAMFA. Topologically, residues 286-292 are cytoplasmic; that stretch reads DLGHFSY. A helical transmembrane segment spans residues 293 to 313; the sequence is SAIQLAFTTLVYPALILGYMG. The Extracellular portion of the chain corresponds to 314-343; that stretch reads QAAYLSKHHTLNSTYQIGYYISVPESVRWP. An N-linked (GlcNAc...) asparagine glycan is attached at N325. Residues 344–364 traverse the membrane as a helical segment; sequence VLVLAILASVVGSQAIISGTF. The Cytoplasmic segment spans residues 365–391; that stretch reads SIINQSQSLSCFPRVKVVHTSENIHGQ. The chain crosses the membrane as a helical span at residues 392-412; that stretch reads IYIPEINWLLMVLCIAVTVGF. Residues 413–422 are Extracellular-facing; sequence RDTKHMGNAS. A glycan (N-linked (GlcNAc...) asparagine) is linked at N420. Residues 423-443 traverse the membrane as a helical segment; that stretch reads GLAVITVMLVTTCLTSLVIML. Topologically, residues 444-451 are cytoplasmic; sequence CWHRSPAL. The chain crosses the membrane as a helical span at residues 452–472; that stretch reads ALVFFLFFGSIEVLYFSASLI. At 473–476 the chain is on the extracellular side; the sequence is KFRE. A helical transmembrane segment spans residues 477-497; that stretch reads GAWLPIMLALILMAVMFIWHH. Over 498-788 the chain is Cytoplasmic; that stretch reads TTIKKYEFDL…LLEVGMVYVL (291 aa).

Belongs to the HAK/KUP transporter (TC 2.A.72.3) family.

Its subcellular location is the membrane. Its function is as follows. High-affinity potassium transporter. The polypeptide is Probable potassium transporter 9 (HAK9) (Oryza sativa subsp. japonica (Rice)).